The following is a 901-amino-acid chain: Modifier of cell death (901 aa).

2 disordered regions span residues 147–169 and 218–245; these read AQKRGRFPPQARSSLSPQKPRAA and PRKSAPWQEETAANGGPQSTSLIRSPSP. A C2H2-type zinc finger spans residues 259-282; sequence FKCAECGDGFPVMDRLCDHMIKQH. Disordered stretches follow at residues 494 to 528, 682 to 717, and 779 to 901; these read KKEHMDYDEPDPNIPSTSAQALGYNPDDDEGDDVP, QERVHQPERRPRRSAAPASPAKPQYRPQPPARSHEE, and HKAI…WDDN. Over residues 817–828 the composition is skewed to low complexity; it reads EAAAKLIQAENE. Over residues 829-840 the composition is skewed to acidic residues; it reads MVVEEEEVEEPP. The segment covering 846–866 has biased composition (basic and acidic residues); the sequence is QVPKEKEVEVAEAEKLPEQVK.

Promotes programmed cell death. Its role in programmed cell death may be in conjunction with cell cycle regulatory factor efl-1 and the synthetic multivulva class B proteins dpl-1 and lin-35, and is independent of the ced-1, ced-8 and ced-9 pathways. This chain is Modifier of cell death, found in Caenorhabditis elegans.